The chain runs to 202 residues: Ribonuclease HII (202 aa).

The RNase H type-2 domain occupies 11-200; sequence GLIAGVDEVG…VRKAIEEFNR (190 aa). 3 residues coordinate a divalent metal cation: Asp17, Glu18, and Asp109.

The protein belongs to the RNase HII family. Mn(2+) is required as a cofactor. It depends on Mg(2+) as a cofactor.

It is found in the cytoplasm. It catalyses the reaction Endonucleolytic cleavage to 5'-phosphomonoester.. Endonuclease that specifically degrades the RNA of RNA-DNA hybrids. This Actinobacillus succinogenes (strain ATCC 55618 / DSM 22257 / CCUG 43843 / 130Z) protein is Ribonuclease HII.